A 430-amino-acid chain; its full sequence is Enolase (430 aa).

Q166 provides a ligand contact to (2R)-2-phosphoglycerate. The active-site Proton donor is the E208. The Mg(2+) site is built by D245, E288, and D315. Residues K340, R369, S370, and K391 each contribute to the (2R)-2-phosphoglycerate site. The active-site Proton acceptor is K340.

This sequence belongs to the enolase family. Mg(2+) serves as cofactor.

It localises to the cytoplasm. The protein localises to the secreted. The protein resides in the cell surface. It catalyses the reaction (2R)-2-phosphoglycerate = phosphoenolpyruvate + H2O. Its pathway is carbohydrate degradation; glycolysis; pyruvate from D-glyceraldehyde 3-phosphate: step 4/5. In terms of biological role, catalyzes the reversible conversion of 2-phosphoglycerate (2-PG) into phosphoenolpyruvate (PEP). It is essential for the degradation of carbohydrates via glycolysis. This chain is Enolase, found in Clostridium beijerinckii (strain ATCC 51743 / NCIMB 8052) (Clostridium acetobutylicum).